Reading from the N-terminus, the 200-residue chain is Protein GrpE (200 aa).

Residues Met1–Glu23 show a composition bias toward acidic residues. Residues Met1–Glu39 form a disordered region.

It belongs to the GrpE family. As to quaternary structure, homodimer.

It localises to the cytoplasm. In terms of biological role, participates actively in the response to hyperosmotic and heat shock by preventing the aggregation of stress-denatured proteins, in association with DnaK and GrpE. It is the nucleotide exchange factor for DnaK and may function as a thermosensor. Unfolded proteins bind initially to DnaJ; upon interaction with the DnaJ-bound protein, DnaK hydrolyzes its bound ATP, resulting in the formation of a stable complex. GrpE releases ADP from DnaK; ATP binding to DnaK triggers the release of the substrate protein, thus completing the reaction cycle. Several rounds of ATP-dependent interactions between DnaJ, DnaK and GrpE are required for fully efficient folding. In Brachyspira hyodysenteriae (strain ATCC 49526 / WA1), this protein is Protein GrpE.